The following is a 125-amino-acid chain: Glycine cleavage system H protein (125 aa).

The Lipoyl-binding domain maps to 19-101 (VGTVGISDYA…EGAAWFFKLT (83 aa)). Lysine 60 is subject to N6-lipoyllysine.

It belongs to the GcvH family. The glycine cleavage system is composed of four proteins: P, T, L and H. (R)-lipoate is required as a cofactor.

In terms of biological role, the glycine cleavage system catalyzes the degradation of glycine. The H protein shuttles the methylamine group of glycine from the P protein to the T protein. The protein is Glycine cleavage system H protein of Paramagnetospirillum magneticum (strain ATCC 700264 / AMB-1) (Magnetospirillum magneticum).